A 245-amino-acid polypeptide reads, in one-letter code: Eukaryotic translation initiation factor 6 (245 aa).

Residue Y113 is modified to Phosphotyrosine. T165 bears the Phosphothreonine mark. Residue S166 is modified to Phosphoserine. A phosphoserine; by CK1 mark is found at S174 and S175. S235 bears the Phosphoserine; by PKC mark. Phosphoserine is present on residues S239 and S243.

It belongs to the eIF-6 family. In terms of assembly, monomer. Associates with the 60S ribosomal subunit. Interacts with RACK1. Interacts with DICER1, AGO2, TARBP2, MOV10 and RPL7A; they form a large RNA-induced silencing complex (RISC). Phosphorylation at Ser-174 and Ser-175 by CSNK1D/CK1 promotes nuclear export. Post-translationally, ufmylated by UFL1.

Its subcellular location is the cytoplasm. It is found in the nucleus. The protein localises to the nucleolus. Functionally, binds to the 60S ribosomal subunit and prevents its association with the 40S ribosomal subunit to form the 80S initiation complex in the cytoplasm. Behaves as a stimulatory translation initiation factor downstream insulin/growth factors. Is also involved in ribosome biogenesis. Associates with pre-60S subunits in the nucleus and is involved in its nuclear export. Cytoplasmic release of TIF6 from 60S subunits and nuclear relocalization is promoted by a RACK1 (RACK1)-dependent protein kinase C activity. In tissues responsive to insulin, controls fatty acid synthesis and glycolysis by exerting translational control of adipogenic transcription factors such as CEBPB, CEBPD and ATF4 that have G/C rich or uORF in their 5'UTR. Required for ROS-dependent megakaryocyte maturation and platelets formation, controls the expression of mitochondrial respiratory chain genes involved in reactive oxygen species (ROS) synthesis. Involved in miRNA-mediated gene silencing by the RNA-induced silencing complex (RISC). Required for both miRNA-mediated translational repression and miRNA-mediated cleavage of complementary mRNAs by RISC. Modulates cell cycle progression and global translation of pre-B cells, its activation seems to be rate-limiting in tumorigenesis and tumor growth. This Bos taurus (Bovine) protein is Eukaryotic translation initiation factor 6.